Consider the following 810-residue polypeptide: Transmembrane channel-like protein 6 (810 aa).

The interval 1 to 26 is disordered; the sequence is MAQSLALALDVPETTGDEGLEPSPYE. Topologically, residues 1–205 are lumenal; sequence MAQSLALALD…GAFSCCSRLR (205 aa). The segment covering 15 to 26 has biased composition (acidic residues); sequence TGDEGLEPSPYE. Threonine 88 carries the phosphothreonine modification. Arginine 93 carries the post-translational modification Omega-N-methylarginine. A glycan (N-linked (GlcNAc...) asparagine) is linked at asparagine 102. Position 104 is a phosphothreonine (threonine 104). At serine 136 the chain carries Phosphoserine. Residues 206–226 traverse the membrane as a helical segment; the sequence is YTCMLALHSLGLALLSGLYAA. The Cytoplasmic segment spans residues 227-253; it reads RPWRYALKQIGGQFGSSVLSYFLFLKT. The chain crosses the membrane as a helical span at residues 254 to 274; the sequence is LLAFNALMLLPLLAFLVGVQA. At 275-338 the chain is on the lumenal side; that stretch reads AFPPDPAGPV…PRLGSLPYNM (64 aa). Asparagine 311 carries an N-linked (GlcNAc...) asparagine glycan. Residues 339–359 form a helical membrane-spanning segment; sequence PLAYLFTMGATFFLTCIILVY. At 360–429 the chain is on the cytoplasmic side; the sequence is SMSHSFGESY…PRSVCGQLRQ (70 aa). The helical transmembrane segment at 430–450 threads the bilayer; sequence VVVLGLGWLLCLGSTMGCTVA. Residues 451 to 468 are Lumenal-facing; that stretch reads VLTFSEVMIQRPASGGQG. A helical transmembrane segment spans residues 469-489; it reads VEALALPLVVSVLNLGASYLF. Residues 490–504 are Cytoplasmic-facing; the sequence is RGLATLERHDSPVLE. The helical transmembrane segment at 505 to 525 threads the bilayer; that stretch reads VYMAICRNLILKMAVLGVLCY. Residues 526–552 are Lumenal-facing; sequence HWLGRRVATLQGQCWEDFVGQELYRFM. Residues 553–573 form a helical membrane-spanning segment; it reads VVDFIFMLLDSLFGELVWRLI. Residues 574 to 603 are Cytoplasmic-facing; the sequence is SEKKLKRGQKPEFDIARNVLDLIYGQTLTW. A helical transmembrane segment spans residues 604–624; the sequence is LGVLFSPLLPAVQILRLLFLF. The Lumenal portion of the chain corresponds to 625–649; sequence HIKKASLMANCQAPRRPWLASHMST. A helical transmembrane segment spans residues 650 to 670; it reads VFLTLLCFPSFLGAAVFLCYA. The Cytoplasmic segment spans residues 671–721; it reads VWQVRPSSTCGPFRTLNTMYEAGTVWVRRLEHAGSGASWLPWLHHFLVENT. The chain crosses the membrane as a helical span at residues 722-742; sequence FFLFLASALLLAVIYFNIQVV. Over 743–810 the chain is Lumenal; the sequence is KGQRKVICLL…QKEPCNPRSP (68 aa). Positions 775–810 are disordered; that stretch reads EEEGRSRPGRTQDATEPPAWHEDGGDQKEPCNPRSP. Residues 793–810 are compositionally biased toward basic and acidic residues; it reads AWHEDGGDQKEPCNPRSP.

This sequence belongs to the TMC family. In terms of assembly, interacts with TMC8. Interacts and forms a complex with TMC8 and CIB1; the interaction stabilizes each component of the complex. Interacts and forms a complex with TMC8 and SLC30A1/ZNT1; the interaction regulates zinc transport into the ER. In terms of tissue distribution, widely expressed. Highly expressed in thymus, lung and spleen. Expressed in lymphocytes and peripheral lymphocytes. Expressed in small and medium dorsal root ganglion (DRG) neurons.

The protein localises to the endoplasmic reticulum membrane. In terms of biological role, acts as a regulatory protein involved in the regulation of numerous cellular processes. Together with its homolog TMC8/EVER2, forms a complex with calcium-binding protein CIB1 in lymphocytes and keratynocytes where TMC6 and TMC8 stabilize CIB1 and reciprocally. Together with TMC8, also forms a complex with and activates zinc transporter ZNT1 at the ER membrane of keratynocytes, thereby facilitating zinc uptake into the ER. Down-regulates the activity of transcription factors induced by zinc and cytokines. Also plays a role in thermal sensation by inhibiting the M-channel (KCNQ2-KCNQ3 channel) current in primary sensory neurons. This is Transmembrane channel-like protein 6 from Mus musculus (Mouse).